A 192-amino-acid polypeptide reads, in one-letter code: ER protein translocation subcomplex subunit sec67 (192 aa).

As to quaternary structure, component of the heterotetrameric Sec62/63complex composed of sec62, sec63, sec66 and sec72. The Sec62/63 complex associates with the Sec61 complex to form the Sec complex.

The protein localises to the cytoplasm. The protein resides in the nucleus. Its function is as follows. Acts as a non-essential component of the Sec62/63 complex which is involved in SRP-independent post-translational translocation across the endoplasmic reticulum (ER) and functions together with the Sec61 complex and bip1 in a channel-forming translocon complex. A cycle of assembly and disassembly of Sec62/63 complex from sec61 may govern the activity of the translocon. sec72 may be involved in signal peptide recognition for a defined subset of leader peptides, or may increase the efficiency of unusual or 'difficult' secretory precursors to the translocation pore, it may be that this protein binds charged leader peptides to the membrane until they engage the translocation apparatus. In Schizosaccharomyces pombe (strain 972 / ATCC 24843) (Fission yeast), this protein is ER protein translocation subcomplex subunit sec67 (sec67).